The chain runs to 274 residues: Eukaryotic translation initiation factor 3 subunit J (274 aa).

2 disordered regions span residues 1–120 (MSGK…DLKH) and 227–246 (EEKA…TKTS). Residues 30–50 (DEEGNESDVLDSWDAAEDSEV) show a composition bias toward acidic residues. A coiled-coil region spans residues 46 to 112 (EDSEVEREKA…AERRERLRRE (67 aa)). 2 stretches are compositionally biased toward basic and acidic residues: residues 51–67 (EREK…KAEA) and 79–92 (RIAE…RQLA). Acidic residues predominate over residues 93 to 102 (EDSDAEEETE). A compositionally biased stretch (basic and acidic residues) spans 103 to 120 (AERRERLRREQKESDLKH).

It belongs to the eIF-3 subunit J family. As to quaternary structure, component of the eukaryotic translation initiation factor 3 (eIF-3) complex.

It is found in the cytoplasm. Component of the eukaryotic translation initiation factor 3 (eIF-3) complex, which is involved in protein synthesis of a specialized repertoire of mRNAs and, together with other initiation factors, stimulates binding of mRNA and methionyl-tRNAi to the 40S ribosome. The eIF-3 complex specifically targets and initiates translation of a subset of mRNAs involved in cell proliferation. This is Eukaryotic translation initiation factor 3 subunit J (hcr-1) from Neurospora crassa (strain ATCC 24698 / 74-OR23-1A / CBS 708.71 / DSM 1257 / FGSC 987).